A 432-amino-acid polypeptide reads, in one-letter code: Adenylosuccinate synthetase (432 aa).

GTP-binding positions include 13–19 (GDEGKGK) and 41–43 (GHT). Residue Asp-14 is the Proton acceptor of the active site. Residues Asp-14 and Gly-41 each coordinate Mg(2+). Residues 14–17 (DEGK), 39–42 (NAGH), Thr-130, Arg-144, Gln-225, Thr-240, and Arg-304 each bind IMP. His-42 (proton donor) is an active-site residue. 300-306 (AVTGRPR) serves as a coordination point for substrate. GTP is bound by residues Arg-306, 332-334 (KLD), and 415-417 (STG).

The protein belongs to the adenylosuccinate synthetase family. In terms of assembly, homodimer. It depends on Mg(2+) as a cofactor.

The protein localises to the cytoplasm. It carries out the reaction IMP + L-aspartate + GTP = N(6)-(1,2-dicarboxyethyl)-AMP + GDP + phosphate + 2 H(+). The protein operates within purine metabolism; AMP biosynthesis via de novo pathway; AMP from IMP: step 1/2. Its function is as follows. Plays an important role in the de novo pathway of purine nucleotide biosynthesis. Catalyzes the first committed step in the biosynthesis of AMP from IMP. This Haemophilus influenzae (strain PittEE) protein is Adenylosuccinate synthetase.